Consider the following 321-residue polypeptide: 5,10-methylenetetrahydromethanopterin reductase (321 aa).

This sequence belongs to the mer family.

It localises to the cytoplasm. It carries out the reaction 5-methyl-5,6,7,8-tetrahydromethanopterin + oxidized coenzyme F420-(gamma-L-Glu)(n) + H(+) = 5,10-methylenetetrahydromethanopterin + reduced coenzyme F420-(gamma-L-Glu)(n). It participates in one-carbon metabolism; methanogenesis from CO(2); methyl-coenzyme M from 5,10-methylene-5,6,7,8-tetrahydromethanopterin: step 1/2. In terms of biological role, catalyzes the reversible reduction of methylene-H(4)MPT to methyl-H(4)MPT. This Methanothermobacter thermautotrophicus (strain ATCC 29096 / DSM 1053 / JCM 10044 / NBRC 100330 / Delta H) (Methanobacterium thermoautotrophicum) protein is 5,10-methylenetetrahydromethanopterin reductase.